The following is a 253-amino-acid chain: DNA repair protein RecO (253 aa).

This sequence belongs to the RecO family.

Involved in DNA repair and RecF pathway recombination. This is DNA repair protein RecO from Pediococcus pentosaceus (strain ATCC 25745 / CCUG 21536 / LMG 10740 / 183-1w).